We begin with the raw amino-acid sequence, 486 residues long: Galactose-1-phosphate uridylyltransferase (486 aa).

The protein belongs to the galactose-1-phosphate uridylyltransferase type 2 family.

The protein resides in the cytoplasm. The enzyme catalyses alpha-D-galactose 1-phosphate + UDP-alpha-D-glucose = alpha-D-glucose 1-phosphate + UDP-alpha-D-galactose. Its pathway is carbohydrate metabolism; galactose metabolism. In Pediococcus pentosaceus (strain ATCC 25745 / CCUG 21536 / LMG 10740 / 183-1w), this protein is Galactose-1-phosphate uridylyltransferase.